The primary structure comprises 413 residues: Serine hydroxymethyltransferase (413 aa).

Residues Leu117 and 121 to 123 (GHL) each bind (6S)-5,6,7,8-tetrahydrofolate. Lys226 carries the N6-(pyridoxal phosphate)lysine modification. Residues Glu239 and 349 to 351 (SPF) each bind (6S)-5,6,7,8-tetrahydrofolate.

The protein belongs to the SHMT family. Homodimer. Pyridoxal 5'-phosphate is required as a cofactor.

The protein localises to the cytoplasm. It catalyses the reaction (6R)-5,10-methylene-5,6,7,8-tetrahydrofolate + glycine + H2O = (6S)-5,6,7,8-tetrahydrofolate + L-serine. The protein operates within one-carbon metabolism; tetrahydrofolate interconversion. It participates in amino-acid biosynthesis; glycine biosynthesis; glycine from L-serine: step 1/1. Its function is as follows. Catalyzes the reversible interconversion of serine and glycine with tetrahydrofolate (THF) serving as the one-carbon carrier. This reaction serves as the major source of one-carbon groups required for the biosynthesis of purines, thymidylate, methionine, and other important biomolecules. Also exhibits THF-independent aldolase activity toward beta-hydroxyamino acids, producing glycine and aldehydes, via a retro-aldol mechanism. The sequence is that of Serine hydroxymethyltransferase from Bacillus anthracis (strain A0248).